The sequence spans 427 residues: 3-phosphoshikimate 1-carboxyvinyltransferase (427 aa).

3-phosphoshikimate contacts are provided by lysine 22, serine 23, and arginine 27. A phosphoenolpyruvate-binding site is contributed by lysine 22. Positions 96 and 124 each coordinate phosphoenolpyruvate. Residues serine 169, serine 170, glutamine 171, serine 197, aspartate 313, asparagine 336, and lysine 340 each coordinate 3-phosphoshikimate. Glutamine 171 lines the phosphoenolpyruvate pocket. Aspartate 313 acts as the Proton acceptor in catalysis. Arginine 344, arginine 386, and lysine 411 together coordinate phosphoenolpyruvate.

Belongs to the EPSP synthase family. Monomer.

Its subcellular location is the cytoplasm. It catalyses the reaction 3-phosphoshikimate + phosphoenolpyruvate = 5-O-(1-carboxyvinyl)-3-phosphoshikimate + phosphate. It functions in the pathway metabolic intermediate biosynthesis; chorismate biosynthesis; chorismate from D-erythrose 4-phosphate and phosphoenolpyruvate: step 6/7. Catalyzes the transfer of the enolpyruvyl moiety of phosphoenolpyruvate (PEP) to the 5-hydroxyl of shikimate-3-phosphate (S3P) to produce enolpyruvyl shikimate-3-phosphate and inorganic phosphate. The polypeptide is 3-phosphoshikimate 1-carboxyvinyltransferase (Escherichia coli O1:K1 / APEC).